Here is a 463-residue protein sequence, read N- to C-terminus: NADH-ubiquinone oxidoreductase chain 4 (463 aa).

Helical transmembrane passes span 24-44 (LWAGAIFQSALLSLLSLIVLN), 62-82 (TISAPLIILSCWLAPIALIAS), 98-118 (IIMIIVITGALIITFSSLELI), 119-139 (LFYIVVETTLIPTLILITRWG), 151-171 (FMFYTLFGSLPLLIAIIAIYI), 198-218 (WALSINCFFNNLPVYGFHLWL), 232-252 (ILAAILLKIGGYGLMRLIALF), 260-280 (LSLALIVFCTWGALITSVICV), 285-305 (LKALIAYSSVGHMSIVAAAIF), 310-330 (WGMNGALMLMVAHGLVSSALF), 353-373 (LLLPLSTLWWLLMCAANLGLP), 404-424 (VFGAIYSLMIFQLSQQGTPFT), and 442-462 (LHILPLILIMINPFSALIAWL).

This sequence belongs to the complex I subunit 4 family.

The protein resides in the mitochondrion membrane. It catalyses the reaction a ubiquinone + NADH + 5 H(+)(in) = a ubiquinol + NAD(+) + 4 H(+)(out). Core subunit of the mitochondrial membrane respiratory chain NADH dehydrogenase (Complex I) that is believed to belong to the minimal assembly required for catalysis. Complex I functions in the transfer of electrons from NADH to the respiratory chain. The immediate electron acceptor for the enzyme is believed to be ubiquinone. This Strongylocentrotus purpuratus (Purple sea urchin) protein is NADH-ubiquinone oxidoreductase chain 4 (ND4).